The primary structure comprises 88 residues: Long neurotoxin 31 (88 aa).

The first 21 residues, 1 to 21, serve as a signal peptide directing secretion; the sequence is MKTLLLTLVVVTIVCLDLGNS. Disulfide bonds link Cys24–Cys42, Cys35–Cys63, Cys48–Cys52, Cys67–Cys78, and Cys79–Cys84.

It belongs to the three-finger toxin family. Long-chain subfamily. Type II alpha-neurotoxin sub-subfamily. In terms of tissue distribution, expressed by the venom gland.

It localises to the secreted. Functionally, binds with high affinity to muscular (alpha-1/CHRNA1) and neuronal (alpha-7/CHRNA7) nicotinic acetylcholine receptor (nAChR) and inhibits acetylcholine from binding to the receptor, thereby impairing neuromuscular and neuronal transmission. The chain is Long neurotoxin 31 from Drysdalia coronoides (White-lipped snake).